A 492-amino-acid chain; its full sequence is Probable cytochrome P450 516B1 (492 aa).

The chain crosses the membrane as a helical span at residues 1–17 (MYLILSLIIFLAYVAFH). Cys-438 lines the heme pocket.

Belongs to the cytochrome P450 family. It depends on heme as a cofactor.

The protein resides in the membrane. This chain is Probable cytochrome P450 516B1 (cyp516B1), found in Dictyostelium discoideum (Social amoeba).